The sequence spans 764 residues: 5-methyltetrahydropteroyltriglutamate--homocysteine methyltransferase (764 aa).

5-methyltetrahydropteroyltri-L-glutamate is bound by residues 16-19 (RELK) and lysine 117. L-homocysteine-binding positions include 442–444 (IGS) and glutamate 495. L-methionine contacts are provided by residues 442-444 (IGS) and glutamate 495. 5-methyltetrahydropteroyltri-L-glutamate contacts are provided by residues 526 to 527 (RC) and tryptophan 572. Residue aspartate 610 participates in L-homocysteine binding. L-methionine is bound at residue aspartate 610. A 5-methyltetrahydropteroyltri-L-glutamate-binding site is contributed by glutamate 616. Zn(2+) contacts are provided by histidine 652, cysteine 654, and glutamate 676. Residue histidine 705 is the Proton donor of the active site. Residue cysteine 737 coordinates Zn(2+).

This sequence belongs to the vitamin-B12 independent methionine synthase family. Requires Zn(2+) as cofactor.

The catalysed reaction is 5-methyltetrahydropteroyltri-L-glutamate + L-homocysteine = tetrahydropteroyltri-L-glutamate + L-methionine. The protein operates within amino-acid biosynthesis; L-methionine biosynthesis via de novo pathway; L-methionine from L-homocysteine (MetE route): step 1/1. Its function is as follows. Catalyzes the transfer of a methyl group from 5-methyltetrahydrofolate to homocysteine resulting in methionine formation. The chain is 5-methyltetrahydropteroyltriglutamate--homocysteine methyltransferase from Bordetella petrii (strain ATCC BAA-461 / DSM 12804 / CCUG 43448).